A 577-amino-acid chain; its full sequence is Arginine--tRNA ligase (577 aa).

Residues 122–132 (PNVAKEMHVGH) carry the 'HIGH' region motif.

This sequence belongs to the class-I aminoacyl-tRNA synthetase family. Monomer.

Its subcellular location is the cytoplasm. The catalysed reaction is tRNA(Arg) + L-arginine + ATP = L-arginyl-tRNA(Arg) + AMP + diphosphate. The protein is Arginine--tRNA ligase of Salmonella paratyphi A (strain ATCC 9150 / SARB42).